A 384-amino-acid chain; its full sequence is ATP phosphoribosyltransferase regulatory subunit (384 aa).

Belongs to the class-II aminoacyl-tRNA synthetase family. HisZ subfamily. As to quaternary structure, heteromultimer composed of HisG and HisZ subunits.

Its subcellular location is the cytoplasm. The protein operates within amino-acid biosynthesis; L-histidine biosynthesis; L-histidine from 5-phospho-alpha-D-ribose 1-diphosphate: step 1/9. Its function is as follows. Required for the first step of histidine biosynthesis. May allow the feedback regulation of ATP phosphoribosyltransferase activity by histidine. This Azoarcus sp. (strain BH72) protein is ATP phosphoribosyltransferase regulatory subunit.